A 155-amino-acid polypeptide reads, in one-letter code: UPF0260 protein NGR_c07710 (155 aa).

It belongs to the UPF0260 family.

This chain is UPF0260 protein NGR_c07710, found in Sinorhizobium fredii (strain NBRC 101917 / NGR234).